The sequence spans 885 residues: MSYTQLLKDFTEISYWNIDNLFNYFDLDIITKNTVNEILPLLTGSFFLDFIVNKFILPPITFLNQLIYFYYPIFESFKIFILKLFQNDLLKIFSNFPLFYTNIKENILNEDIFFKSQYSNSITLLQLPVYLDNKFFIGFLNSIFLSLPFSCNQLICFYRFFTSGPSYGIIATLGWLIGQCSLFFCLLFGFRPVIIQWFSLEPLNYFLAIFIIVNFLRKTINSTTFTQKNKNRKNKVDLEKLNKQKEIESIFGMHFLLSWTESVSLFSNFSSFNFGRESNILSISSSPSISQYYLTQGSYIFGIFIGCIFFSYIYNVIIIRLLFRFHKVFITSNNNKTNSEFKNFMNLVGFNTLVLIIGVTIASISNFDVGYLLTSSLGFTPQDKALSRILLNTNSSDPQIRISLAPGRRDGFIGNDNDFMYIDIFSFNDKEYKNTLEFEEVNYQVEYEWMSRYDKFNERERRPKPQKSIDTKKEFNNHSMKEYRSLDVFPTDRYKNRETKKIFNDNNSFINENYLNKNTKFNFYKEIMDSNFKLDFIPYKKAFFAANTTEADLFEVQQEIKQKYYINTIYKVLLNFEVDSMISRQLTNSILLEPQEADLFNRRVALSNYYESNYYYSKMNHFDLFRNNFFNSKSYINNVYNQQFNGTLRIVSKLFPISLNENPNQRSILKFDYPLIEEYRKNKYTHEEIIPDKFNQFSYDNYKGLLSTTSSPLYITWNHNLNQLVITNNLILKNFNTKSQLDSYPFYSIDENKLIQGPMTLTNLQTLNNLVRNSYSLFSNPALRKLFYVNENIFYQNDNIFLLDALDLENYEQYLFFKLNVSPKPIEASLKNSNSVNWYAFRYNDEIRDQKRDEEANKYIKYIVQEINKDDERNYKFKYDLKSMN.

6 helical membrane passes run 62 to 82, 135 to 155, 168 to 188, 193 to 213, 299 to 319, and 344 to 364; these read FLNQLIYFYYPIFESFKIFIL, FFIGFLNSIFLSLPFSCNQLI, GIIATLGWLIGQCSLFFCLLF, VIIQWFSLEPLNYFLAIFIIV, YIFGIFIGCIFFSYIYNVIII, and FMNLVGFNTLVLIIGVTIASI.

It belongs to the ycf78 family.

It localises to the plastid. The protein resides in the chloroplast membrane. This is an uncharacterized protein from Bigelowiella natans (Pedinomonas minutissima).